We begin with the raw amino-acid sequence, 323 residues long: tRNA dimethylallyltransferase (323 aa).

18–25 is an ATP binding site; that stretch reads GPTASGKS. 20 to 25 lines the substrate pocket; sequence TASGKS. 3 interaction with substrate tRNA regions span residues 43–46, 167–171, and 249–254; these read DSAQ, QRIQR, and RCVGYR.

It belongs to the IPP transferase family. Monomer. The cofactor is Mg(2+).

The catalysed reaction is adenosine(37) in tRNA + dimethylallyl diphosphate = N(6)-dimethylallyladenosine(37) in tRNA + diphosphate. In terms of biological role, catalyzes the transfer of a dimethylallyl group onto the adenine at position 37 in tRNAs that read codons beginning with uridine, leading to the formation of N6-(dimethylallyl)adenosine (i(6)A). The sequence is that of tRNA dimethylallyltransferase from Nitrosospira multiformis (strain ATCC 25196 / NCIMB 11849 / C 71).